A 307-amino-acid polypeptide reads, in one-letter code: Auxin-induced protein PCNT115 (307 aa).

The Proton donor role is filled by Tyr-64. His-136 is a binding site for substrate. 215–225 (SPLGRGFLSSG) provides a ligand contact to NADP(+).

This sequence belongs to the aldo/keto reductase family. Aldo/keto reductase 2 subfamily.

The chain is Auxin-induced protein PCNT115 from Nicotiana tabacum (Common tobacco).